The sequence spans 612 residues: Coagulation factor XII (612 aa).

The first 19 residues, 1–19, serve as a signal peptide directing secretion; the sequence is MRALLLLGALLVSLESTVS. Residues 42–90 enclose the Fibronectin type-II domain; it reads VTGEPCHFPFQYHRQLHHKCIHRGRPGPRPWCATTPNFEKDQRWAYCLE. Intrachain disulfides connect Cys-47–Cys-73, Cys-61–Cys-88, Cys-98–Cys-110, Cys-104–Cys-119, Cys-121–Cys-130, Cys-135–Cys-163, Cys-161–Cys-170, Cys-178–Cys-189, Cys-183–Cys-198, Cys-200–Cys-209, Cys-217–Cys-306, Cys-240–Cys-288, Cys-268–Cys-301, Cys-355–Cys-482, Cys-393–Cys-409, Cys-401–Cys-471, Cys-432–Cys-435, Cys-498–Cys-566, Cys-529–Cys-545, and Cys-556–Cys-587. In terms of domain architecture, EGF-like 1 spans 94–131; that stretch reads VKDHCSKHNPCQKGGTCVNMPDGPRCICADHFTGKHCQ. Thr-109 is a glycosylation site (O-linked (Fuc) threonine). Residues 133–173 form the Fibronectin type-I domain; sequence EKCFEPQFFRFFHENEIWHRLEPAGVVKCQCKGPNAQCKPL. The EGF-like 2 domain maps to 174–210; that stretch reads ASQVCRTNPCLNGGSCLQAEGHRLCRCAPSFAGRLCD. The Kringle domain maps to 217 to 306; it reads CYDDRDRGLS…SWNYCRLAPC (90 aa). Asn-251 and Asn-282 each carry an N-linked (GlcNAc...) asparagine glycan. One can recognise a Peptidase S1 domain in the interval 369–611; the sequence is VVGGLVALPG…YLAWIREHTA (243 aa). His-408 serves as the catalytic Charge relay system. N-linked (GlcNAc...) asparagine glycosylation is present at Asn-429. Asp-457 (charge relay system) is an active-site residue. Residue Ser-560 is the Charge relay system of the active site.

Belongs to the peptidase S1 family. In terms of assembly, interacts with HRG; the interaction, which is enhanced in the presence of zinc ions and inhibited by heparin-binding, inhibits factor XII autoactivation and contact-initiated coagulation. In terms of processing, O- and N-glycosylated.

Its subcellular location is the secreted. It carries out the reaction Selective cleavage of Arg-|-Ile bonds in factor VII to form factor VIIa and factor XI to form factor XIa.. Activity is promoted in the presence of negatively charged surfaces. Its function is as follows. Factor XII is a serum glycoprotein that participates in the initiation of blood coagulation, fibrinolysis, and the generation of bradykinin and angiotensin. Prekallikrein is cleaved by factor XII to form kallikrein, which then cleaves factor XII first to alpha-factor XIIa and then to beta-factor XIIa. Alpha-factor XIIa activates factor XI to factor XIa. This is Coagulation factor XII (F12) from Bos taurus (Bovine).